Consider the following 172-residue polypeptide: Shikimate kinase (172 aa).

Residue 11–16 (GAGKST) participates in ATP binding. Serine 15 is a binding site for Mg(2+). Substrate is bound by residues aspartate 33, arginine 57, and glycine 79. ATP is bound at residue arginine 117. A substrate-binding site is contributed by arginine 136. Arginine 153 contributes to the ATP binding site.

The protein belongs to the shikimate kinase family. As to quaternary structure, monomer. Mg(2+) serves as cofactor.

The protein resides in the cytoplasm. It carries out the reaction shikimate + ATP = 3-phosphoshikimate + ADP + H(+). It participates in metabolic intermediate biosynthesis; chorismate biosynthesis; chorismate from D-erythrose 4-phosphate and phosphoenolpyruvate: step 5/7. Functionally, catalyzes the specific phosphorylation of the 3-hydroxyl group of shikimic acid using ATP as a cosubstrate. This is Shikimate kinase from Pseudomonas entomophila (strain L48).